The sequence spans 219 residues: Phosphatidylserine decarboxylase proenzyme (219 aa).

The Schiff-base intermediate with substrate; via pyruvic acid role is filled by Ser188. Ser188 carries the pyruvic acid (Ser); by autocatalysis modification.

It belongs to the phosphatidylserine decarboxylase family. PSD-A subfamily. As to quaternary structure, heterodimer of a large membrane-associated beta subunit and a small pyruvoyl-containing alpha subunit. Requires pyruvate as cofactor. Is synthesized initially as an inactive proenzyme. Formation of the active enzyme involves a self-maturation process in which the active site pyruvoyl group is generated from an internal serine residue via an autocatalytic post-translational modification. Two non-identical subunits are generated from the proenzyme in this reaction, and the pyruvate is formed at the N-terminus of the alpha chain, which is derived from the carboxyl end of the proenzyme. The post-translation cleavage follows an unusual pathway, termed non-hydrolytic serinolysis, in which the side chain hydroxyl group of the serine supplies its oxygen atom to form the C-terminus of the beta chain, while the remainder of the serine residue undergoes an oxidative deamination to produce ammonia and the pyruvoyl prosthetic group on the alpha chain.

It localises to the cell membrane. It catalyses the reaction a 1,2-diacyl-sn-glycero-3-phospho-L-serine + H(+) = a 1,2-diacyl-sn-glycero-3-phosphoethanolamine + CO2. Its pathway is phospholipid metabolism; phosphatidylethanolamine biosynthesis; phosphatidylethanolamine from CDP-diacylglycerol: step 2/2. Functionally, catalyzes the formation of phosphatidylethanolamine (PtdEtn) from phosphatidylserine (PtdSer). This chain is Phosphatidylserine decarboxylase proenzyme, found in Geobacter sp. (strain M21).